The primary structure comprises 158 residues: uncharacterized protein (158 aa).

This is an uncharacterized protein from Mycobacterium tuberculosis (strain CDC 1551 / Oshkosh).